The chain runs to 497 residues: MSKRPSISFSEFEVPQKGVAVVLVAKGGGFADEAAKAVGGAEKIARIADISGFTGALGKTAEAIETTPAGVEKIVLVGVGEPGKLGNDDWLKIGGAAFSQIGNAERVTLTLALPETTIAGDEAADVALGMVLRSYKFDRYKTRKSEENGEPKHAAKITICVADTHSARKTFEVAEAVADGVIQARNLVNEPANILGPVEFAEEAEKLEKLGVKVEVLGEKELKKLGMGALLGVAQGSVRPPRLVVMEWHGAKGKEKPIAFVGKGVVFDTGGISIKPAANMEDMKGDMGGAAAVTGLMRALAGRKAKVNAIGVIGLVENMPDGNAQRPGDIVTSMSGQTIEVINTDAEGRLVLADALHYTNDRFKPRFIINLATLTGAVMVALGQYHAGLFSNDDELADQLYDAGQSTGEKLWRLPLGTEYDKMIDSKFADMKNSAGRYGGSITAAQFLKRFVGETPWAHLDVAGTAMGSPANEYNQSWASGFGVRLLDRLVRDQFES.

2 residues coordinate Mn(2+): Lys-263 and Asp-268. Residue Lys-275 is part of the active site. Residues Asp-286, Asp-345, and Glu-347 each coordinate Mn(2+). Arg-349 is a catalytic residue.

It belongs to the peptidase M17 family. Requires Mn(2+) as cofactor.

It is found in the cytoplasm. It carries out the reaction Release of an N-terminal amino acid, Xaa-|-Yaa-, in which Xaa is preferably Leu, but may be other amino acids including Pro although not Arg or Lys, and Yaa may be Pro. Amino acid amides and methyl esters are also readily hydrolyzed, but rates on arylamides are exceedingly low.. It catalyses the reaction Release of an N-terminal amino acid, preferentially leucine, but not glutamic or aspartic acids.. Presumably involved in the processing and regular turnover of intracellular proteins. Catalyzes the removal of unsubstituted N-terminal amino acids from various peptides. This chain is Probable cytosol aminopeptidase, found in Brucella suis biovar 1 (strain 1330).